A 277-amino-acid chain; its full sequence is Translation initiation factor 2 subunit alpha (277 aa).

The S1 motif domain maps to 22–93; sequence GEIVVGTVQE…KRGQVDVSLK (72 aa).

Belongs to the eIF-2-alpha family. In terms of assembly, heterotrimer composed of an alpha, a beta and a gamma chain.

Functionally, eIF-2 functions in the early steps of protein synthesis by forming a ternary complex with GTP and initiator tRNA. This is Translation initiation factor 2 subunit alpha (eif2a) from Aeropyrum pernix (strain ATCC 700893 / DSM 11879 / JCM 9820 / NBRC 100138 / K1).